The primary structure comprises 137 residues: Small ribosomal subunit protein uS12 (137 aa).

Aspartate 102 is modified (3-methylthioaspartic acid).

This sequence belongs to the universal ribosomal protein uS12 family. Part of the 30S ribosomal subunit. Contacts proteins S8 and S17. May interact with IF1 in the 30S initiation complex.

With S4 and S5 plays an important role in translational accuracy. In terms of biological role, interacts with and stabilizes bases of the 16S rRNA that are involved in tRNA selection in the A site and with the mRNA backbone. Located at the interface of the 30S and 50S subunits, it traverses the body of the 30S subunit contacting proteins on the other side and probably holding the rRNA structure together. The combined cluster of proteins S8, S12 and S17 appears to hold together the shoulder and platform of the 30S subunit. This chain is Small ribosomal subunit protein uS12, found in Mycoplasmopsis agalactiae (strain NCTC 10123 / CIP 59.7 / PG2) (Mycoplasma agalactiae).